We begin with the raw amino-acid sequence, 192 residues long: Ion-translocating oxidoreductase complex subunit A (192 aa).

The next 6 membrane-spanning stretches (helical) occupy residues 5–25 (LLLLISTVLVNNFVLVKFLGL), 39–59 (IGMSMATTFVLTLASILSYLV), 65–85 (LPFDLSYLRTMSFILVIAVVV), 102–122 (ALGIYLPLITTNCAVLGVALL), 134–154 (AIFGFGAALGFSLVLILFSAM), and 171–191 (AIAMITAGLMSLAFMGFTGLV).

This sequence belongs to the NqrDE/RnfAE family. In terms of assembly, the complex is composed of six subunits: RnfA, RnfB, RnfC, RnfD, RnfE and RnfG.

The protein resides in the cell inner membrane. In terms of biological role, part of a membrane-bound complex that couples electron transfer with translocation of ions across the membrane. The chain is Ion-translocating oxidoreductase complex subunit A from Shewanella baltica (strain OS223).